A 486-amino-acid chain; its full sequence is Lipase 1 (486 aa).

Residues cysteine 58 and cysteine 82 are joined by a disulfide bond. Serine 193 serves as the catalytic Acyl-ester intermediate. The active-site Charge relay system is aspartate 303. N-linked (GlcNAc...) asparagine glycosylation occurs at asparagine 332. The active-site Charge relay system is histidine 392.

Belongs to the type-B carboxylesterase/lipase family.

The enzyme catalyses a triacylglycerol + H2O = a diacylglycerol + a fatty acid + H(+). The sequence is that of Lipase 1 (LIP1) from Yarrowia lipolytica (strain CLIB 122 / E 150) (Yeast).